The primary structure comprises 394 residues: Tubulin-like protein CetZ5 (394 aa).

GTP is bound by residues Q10–N14, G110–G112, E142, N169, and N187.

Belongs to the CetZ family.

The protein localises to the cytoplasm. Functionally, involved in cell shape control. This Haloferax volcanii (strain ATCC 29605 / DSM 3757 / JCM 8879 / NBRC 14742 / NCIMB 2012 / VKM B-1768 / DS2) (Halobacterium volcanii) protein is Tubulin-like protein CetZ5.